Reading from the N-terminus, the 241-residue chain is Demethylmenaquinone methyltransferase (241 aa).

S-adenosyl-L-methionine is bound by residues T68, D88, and 114-115 (DA).

The protein belongs to the class I-like SAM-binding methyltransferase superfamily. MenG/UbiE family.

The catalysed reaction is a 2-demethylmenaquinol + S-adenosyl-L-methionine = a menaquinol + S-adenosyl-L-homocysteine + H(+). Its pathway is quinol/quinone metabolism; menaquinone biosynthesis; menaquinol from 1,4-dihydroxy-2-naphthoate: step 2/2. Its function is as follows. Methyltransferase required for the conversion of demethylmenaquinol (DMKH2) to menaquinol (MKH2). The sequence is that of Demethylmenaquinone methyltransferase from Deinococcus radiodurans (strain ATCC 13939 / DSM 20539 / JCM 16871 / CCUG 27074 / LMG 4051 / NBRC 15346 / NCIMB 9279 / VKM B-1422 / R1).